Here is a 482-residue protein sequence, read N- to C-terminus: MVTTAEKTNIGYITQIIGPVVDVKFPSGKLPQIYNALTIKGTNEAGQELNLTVEVQQLLGDNQIRAVAMSSTDGLVRGLEVVDTGAPISVPVGKATLGRIFNVLGEPVDNRGPVNNQETLPIHRPAPKLTELETKPSVFETGIKVVDLLTPYRRGGKIGLFGGAGVGKTVIMMELINNIATQHGGVSVFAGVGERTREGNDLYNEMIESGVINKDNLNESKIALVYGQMNEPPGARMRVGLSGLTMAEYFRDVNKQDVLLFIDNIFRFVQAGSEVSALLGRMPSAVGYQPTLGTDVGQLQERITSTTEGSITSIQAVYVPADDLTDPAPATTFAHLDGTTVLSRGLAAKGIYPAVDPLGSTSTMLQPNIVGDEHYNTARAVQSTLQRYKELQDIIAILGLDELSEEDRLIVARARKVERFLSQPFFVAEVFTGSPGKYVKLEDTIKGFQKILSGELDDLPEQAFYLVGDINEAIAKAEKLKG.

Residue Gly-162–Thr-169 participates in ATP binding.

This sequence belongs to the ATPase alpha/beta chains family. In terms of assembly, F-type ATPases have 2 components, CF(1) - the catalytic core - and CF(0) - the membrane proton channel. CF(1) has five subunits: alpha(3), beta(3), gamma(1), delta(1), epsilon(1). CF(0) has four main subunits: a(1), b(1), b'(1) and c(9-12).

The protein resides in the cellular thylakoid membrane. The catalysed reaction is ATP + H2O + 4 H(+)(in) = ADP + phosphate + 5 H(+)(out). Produces ATP from ADP in the presence of a proton gradient across the membrane. The catalytic sites are hosted primarily by the beta subunits. This is ATP synthase subunit beta from Trichormus variabilis (strain ATCC 29413 / PCC 7937) (Anabaena variabilis).